The following is a 282-amino-acid chain: Transcription factor LBX1 (282 aa).

Over residues 1–20 (MTSKEDGKAAPGEERRRSPL) the composition is skewed to basic and acidic residues. The tract at residues 1–36 (MTSKEDGKAAPGEERRRSPLDHLPPPANSNKPLTPF) is disordered. The homeobox DNA-binding region spans 125–184 (RRKSRTAFTNHQIYELEKRFLYQKYLSPADRDQIAQQLGLTNAQVITWFQNRRAKLKRDL). Residues 210–282 (ELEQNSEASG…EEDEEIDVDD (73 aa)) form a disordered region. Residues 218–227 (SGGGGGGGCG) show a composition bias toward gly residues. Acidic residues predominate over residues 269-282 (CSEDEEDEEIDVDD).

Interacts with SKOR1 which acts as a transcriptional corepressor. In terms of tissue distribution, expressed in the dorsal part of the spinal cord and hindbrain and in presumptive myogenic cells in lateral regions of differentiating somites.

The protein localises to the nucleus. Its function is as follows. Transcription factor required for the development of GABAergic interneurons in the dorsal horn of the spinal cord and migration and further development of hypaxial muscle precursor cells for limb muscles, diaphragm and hypoglossal cord. The sequence is that of Transcription factor LBX1 (Lbx1) from Mus musculus (Mouse).